A 423-amino-acid polypeptide reads, in one-letter code: UPF0229 protein VP0986 (423 aa).

Residues 69–112 (GGVRERVHPGNDQFITGDKIERPKGGGQGSGSGEGNASPDGEGQ) form a disordered region. A compositionally biased stretch (gly residues) spans 93–102 (GGGQGSGSGE).

This sequence belongs to the UPF0229 family.

The sequence is that of UPF0229 protein VP0986 from Vibrio parahaemolyticus serotype O3:K6 (strain RIMD 2210633).